We begin with the raw amino-acid sequence, 159 residues long: 6,7-dimethyl-8-ribityllumazine synthase (159 aa).

5-amino-6-(D-ribitylamino)uracil contacts are provided by residues Phe-23, 58 to 60, and 82 to 84; these read AYE and TII. The active-site Proton donor is the His-90. Leu-115 lines the 5-amino-6-(D-ribitylamino)uracil pocket. Arg-129 contributes to the (2S)-2-hydroxy-3-oxobutyl phosphate binding site.

This sequence belongs to the DMRL synthase family. In terms of assembly, forms an icosahedral capsid composed of 60 subunits, arranged as a dodecamer of pentamers.

It catalyses the reaction (2S)-2-hydroxy-3-oxobutyl phosphate + 5-amino-6-(D-ribitylamino)uracil = 6,7-dimethyl-8-(1-D-ribityl)lumazine + phosphate + 2 H2O + H(+). Its pathway is cofactor biosynthesis; riboflavin biosynthesis; riboflavin from 2-hydroxy-3-oxobutyl phosphate and 5-amino-6-(D-ribitylamino)uracil: step 1/2. Functionally, catalyzes the formation of 6,7-dimethyl-8-ribityllumazine by condensation of 5-amino-6-(D-ribitylamino)uracil with 3,4-dihydroxy-2-butanone 4-phosphate. This is the penultimate step in the biosynthesis of riboflavin. The polypeptide is 6,7-dimethyl-8-ribityllumazine synthase (Blochmanniella floridana).